The chain runs to 272 residues: Phosphatidylglycerol--prolipoprotein diacylglyceryl transferase (272 aa).

4 helical membrane passes run 15-35 (LGPL…LVLF), 53-73 (AFAV…WHVV), 90-110 (IWEG…CFFV), and 117-137 (VPPF…LCFA). A 1,2-diacyl-sn-glycero-3-phospho-(1'-sn-glycerol) is bound at residue R138. The next 3 membrane-spanning stretches (helical) occupy residues 174 to 194 (FHPI…ILLV), 199 to 219 (VFVK…VLYG), and 237 to 257 (FGLD…VLIA).

Belongs to the Lgt family.

The protein localises to the cell membrane. The catalysed reaction is L-cysteinyl-[prolipoprotein] + a 1,2-diacyl-sn-glycero-3-phospho-(1'-sn-glycerol) = an S-1,2-diacyl-sn-glyceryl-L-cysteinyl-[prolipoprotein] + sn-glycerol 1-phosphate + H(+). Its pathway is protein modification; lipoprotein biosynthesis (diacylglyceryl transfer). In terms of biological role, catalyzes the transfer of the diacylglyceryl group from phosphatidylglycerol to the sulfhydryl group of the N-terminal cysteine of a prolipoprotein, the first step in the formation of mature lipoproteins. In Tropheryma whipplei (strain Twist) (Whipple's bacillus), this protein is Phosphatidylglycerol--prolipoprotein diacylglyceryl transferase.